The primary structure comprises 181 residues: Protein Syd (181 aa).

Belongs to the Syd family.

It is found in the cell inner membrane. Interacts with the SecY protein in vivo. May bind preferentially to an uncomplexed state of SecY, thus functioning either as a chelating agent for excess SecY in the cell or as a regulatory factor that negatively controls the translocase function. In Escherichia fergusonii (strain ATCC 35469 / DSM 13698 / CCUG 18766 / IAM 14443 / JCM 21226 / LMG 7866 / NBRC 102419 / NCTC 12128 / CDC 0568-73), this protein is Protein Syd.